An 89-amino-acid chain; its full sequence is Small ribosomal subunit protein uS15 (89 aa).

Belongs to the universal ribosomal protein uS15 family. Part of the 30S ribosomal subunit. Forms a bridge to the 50S subunit in the 70S ribosome, contacting the 23S rRNA.

One of the primary rRNA binding proteins, it binds directly to 16S rRNA where it helps nucleate assembly of the platform of the 30S subunit by binding and bridging several RNA helices of the 16S rRNA. Its function is as follows. Forms an intersubunit bridge (bridge B4) with the 23S rRNA of the 50S subunit in the ribosome. In Chromobacterium violaceum (strain ATCC 12472 / DSM 30191 / JCM 1249 / CCUG 213 / NBRC 12614 / NCIMB 9131 / NCTC 9757 / MK), this protein is Small ribosomal subunit protein uS15.